Reading from the N-terminus, the 420-residue chain is Gamma-glutamyl phosphate reductase (420 aa).

It belongs to the gamma-glutamyl phosphate reductase family.

It is found in the cytoplasm. The enzyme catalyses L-glutamate 5-semialdehyde + phosphate + NADP(+) = L-glutamyl 5-phosphate + NADPH + H(+). The protein operates within amino-acid biosynthesis; L-proline biosynthesis; L-glutamate 5-semialdehyde from L-glutamate: step 2/2. Catalyzes the NADPH-dependent reduction of L-glutamate 5-phosphate into L-glutamate 5-semialdehyde and phosphate. The product spontaneously undergoes cyclization to form 1-pyrroline-5-carboxylate. The sequence is that of Gamma-glutamyl phosphate reductase from Acidiphilium cryptum (strain JF-5).